The chain runs to 198 residues: Protoplast secreted protein 2 (198 aa).

The signal sequence occupies residues 1-21; that stretch reads MPRVAIIIYTLYGHVAATAEA. The region spanning 22 to 191 is the Flavodoxin-like domain; sequence EKKGIEAAGG…QVHEIQGKTF (170 aa).

It belongs to the WrbA family.

The protein resides in the secreted. The protein is Protoplast secreted protein 2 (PST2) of Saccharomyces cerevisiae (strain ATCC 204508 / S288c) (Baker's yeast).